Here is a 721-residue protein sequence, read N- to C-terminus: Polyribonucleotide nucleotidyltransferase (721 aa).

Mg(2+) contacts are provided by D495 and D501. The region spanning 562–621 (PRLLSFRIDPELIGTVIGPGGRTIKGITERTNTKIDIEDGGIVTIASHDGAAAEEAQKII) is the KH domain. Positions 631–699 (GEVFSGSITR…NRGRINLTLR (69 aa)) constitute an S1 motif domain.

Belongs to the polyribonucleotide nucleotidyltransferase family. Mg(2+) is required as a cofactor.

The protein resides in the cytoplasm. The catalysed reaction is RNA(n+1) + phosphate = RNA(n) + a ribonucleoside 5'-diphosphate. In terms of biological role, involved in mRNA degradation. Catalyzes the phosphorolysis of single-stranded polyribonucleotides processively in the 3'- to 5'-direction. The chain is Polyribonucleotide nucleotidyltransferase from Synechococcus sp. (strain CC9605).